Here is a 362-residue protein sequence, read N- to C-terminus: Peptide chain release factor 1 (362 aa).

The residue at position 237 (Gln-237) is an N5-methylglutamine. Positions 289 to 308 (AAEISDTRRNLLGSGDRSDR) are disordered.

It belongs to the prokaryotic/mitochondrial release factor family. In terms of processing, methylated by PrmC. Methylation increases the termination efficiency of RF1.

It localises to the cytoplasm. Peptide chain release factor 1 directs the termination of translation in response to the peptide chain termination codons UAG and UAA. The chain is Peptide chain release factor 1 from Vibrio cholerae serotype O1 (strain ATCC 39541 / Classical Ogawa 395 / O395).